The chain runs to 157 residues: Cuticle protein 19 (157 aa).

Tandem repeats lie at residues 11-14, 18-21, 24-27, 29-32, 39-42, and 47-50. Residues 56 to 127 enclose the Chitin-binding type R&amp;R domain; that stretch reads YPKYAFEYGV…SGPSAHPAPA (72 aa). The stretch at 141-144 is repeat 7; that stretch reads AAPA.

Its function is as follows. Component of the cuticle of migratory locust which contains more than 100 different structural proteins. This is Cuticle protein 19 from Locusta migratoria (Migratory locust).